The chain runs to 140 residues: Transcription antitermination protein NusB (140 aa).

Belongs to the NusB family.

In terms of biological role, involved in transcription antitermination. Required for transcription of ribosomal RNA (rRNA) genes. Binds specifically to the boxA antiterminator sequence of the ribosomal RNA (rrn) operons. This Streptococcus pneumoniae (strain JJA) protein is Transcription antitermination protein NusB.